Consider the following 219-residue polypeptide: Triosephosphate isomerase (219 aa).

6 to 8 (NYK) serves as a coordination point for substrate. The Electrophile role is filled by His-90. Residue Glu-138 is the Proton acceptor of the active site. Substrate is bound by residues Ile-143, Gly-178, and 199-200 (AS).

The protein belongs to the triosephosphate isomerase family. In terms of assembly, homotetramer; dimer of dimers.

Its subcellular location is the cytoplasm. The catalysed reaction is D-glyceraldehyde 3-phosphate = dihydroxyacetone phosphate. It functions in the pathway carbohydrate biosynthesis; gluconeogenesis. Its pathway is carbohydrate degradation; glycolysis; D-glyceraldehyde 3-phosphate from glycerone phosphate: step 1/1. Its function is as follows. Involved in the gluconeogenesis. Catalyzes stereospecifically the conversion of dihydroxyacetone phosphate (DHAP) to D-glyceraldehyde-3-phosphate (G3P). This is Triosephosphate isomerase from Methanocaldococcus jannaschii (strain ATCC 43067 / DSM 2661 / JAL-1 / JCM 10045 / NBRC 100440) (Methanococcus jannaschii).